Here is a 118-residue protein sequence, read N- to C-terminus: Large ribosomal subunit protein uL24 (118 aa).

Belongs to the universal ribosomal protein uL24 family. As to quaternary structure, part of the 50S ribosomal subunit.

Its function is as follows. One of two assembly initiator proteins, it binds directly to the 5'-end of the 23S rRNA, where it nucleates assembly of the 50S subunit. Functionally, one of the proteins that surrounds the polypeptide exit tunnel on the outside of the subunit. This chain is Large ribosomal subunit protein uL24, found in Prochlorococcus marinus (strain AS9601).